We begin with the raw amino-acid sequence, 208 residues long: 3-isopropylmalate dehydratase small subunit (208 aa).

It belongs to the LeuD family. LeuD type 1 subfamily. As to quaternary structure, heterodimer of LeuC and LeuD.

The catalysed reaction is (2R,3S)-3-isopropylmalate = (2S)-2-isopropylmalate. It participates in amino-acid biosynthesis; L-leucine biosynthesis; L-leucine from 3-methyl-2-oxobutanoate: step 2/4. Functionally, catalyzes the isomerization between 2-isopropylmalate and 3-isopropylmalate, via the formation of 2-isopropylmaleate. The chain is 3-isopropylmalate dehydratase small subunit from Granulibacter bethesdensis (strain ATCC BAA-1260 / CGDNIH1).